The chain runs to 225 residues: Octanoyltransferase (225 aa).

Residues 44–219 (RETPDEIWLL…NFIAQLTHRI (176 aa)) form the BPL/LPL catalytic domain. Substrate contacts are provided by residues 83-90 (RGGQITYH), 150-152 (SLG), and 163-165 (GIA). Cys181 serves as the catalytic Acyl-thioester intermediate.

This sequence belongs to the LipB family.

Its subcellular location is the cytoplasm. It carries out the reaction octanoyl-[ACP] + L-lysyl-[protein] = N(6)-octanoyl-L-lysyl-[protein] + holo-[ACP] + H(+). The protein operates within protein modification; protein lipoylation via endogenous pathway; protein N(6)-(lipoyl)lysine from octanoyl-[acyl-carrier-protein]: step 1/2. Its function is as follows. Catalyzes the transfer of endogenously produced octanoic acid from octanoyl-acyl-carrier-protein onto the lipoyl domains of lipoate-dependent enzymes. Lipoyl-ACP can also act as a substrate although octanoyl-ACP is likely to be the physiological substrate. This chain is Octanoyltransferase, found in Nitrosomonas eutropha (strain DSM 101675 / C91 / Nm57).